A 129-amino-acid polypeptide reads, in one-letter code: Omega-scoloptoxin(05)-Ssm1a (129 aa).

The first 24 residues, 1-24 (MPSLCIIALFGTLTFYTLIPSIHT), serve as a signal peptide directing secretion. Residues 25-46 (LKCVRCDGPMSNYDCKTTYPAA) constitute a propeptide that is removed on maturation.

This sequence belongs to the scoloptoxin-05 family. Post-translationally, contains 3 disulfide bonds. In terms of tissue distribution, expressed by the venom gland.

The protein resides in the secreted. In terms of biological role, toxin that increase voltage-gated calcium channel (Cav) currents in DRG neurons by 70% and 120%, when 1 uM and 10 uM are tested, respectively. This is Omega-scoloptoxin(05)-Ssm1a from Scolopendra mutilans (Chinese red-headed centipede).